The primary structure comprises 400 residues: Probable glycosyltransferase WbjE (400 aa).

The protein belongs to the glycosyltransferase group 1 family. Glycosyltransferase 4 subfamily.

The protein operates within bacterial outer membrane biogenesis; LPS O-antigen biosynthesis. The polypeptide is Probable glycosyltransferase WbjE (wbjE) (Pseudomonas aeruginosa).